An 828-amino-acid polypeptide reads, in one-letter code: Protein kintoun (828 aa).

5 disordered regions span residues 1-31 (MSGSTASARNKHSKGNLKHNNNKNKNNDEPI), 223-250 (KNPTDEELEPHPLEHSFPTKPTAGEGEP), 383-424 (DSGV…PTSN), 556-668 (APVQ…HRGI), and 741-828 (KKNQ…EDLI). Basic residues predominate over residues 9–22 (RNKHSKGNLKHNNN). Position 384 is a phosphoserine (Ser-384). The span at 395–414 (PVEEEEDGEDEIEAEEEEEE) shows a compositional bias: acidic residues. Basic and acidic residues predominate over residues 556 to 573 (APVQEDKPGDIQFKRNDQ). Residues 591–601 (EREEGEIEEAE) are compositionally biased toward acidic residues. A compositionally biased stretch (basic residues) spans 606–620 (KKSASKKQRGKRNKK). The span at 625–641 (SESACVSLPTSVDSQPM) shows a compositional bias: polar residues. The segment covering 741–755 (KKNQKRRDCKLRAQQ) has biased composition (basic residues). Residue Ser-759 is modified to Phosphoserine. Basic and acidic residues predominate over residues 788–808 (DSGLDLTRHNKKRELAEEADN). The segment covering 815–828 (EMDDDDDDEDEDLI) has biased composition (acidic residues).

The protein belongs to the PIH1 family. Kintoun subfamily. In terms of assembly, interacts with Pp1alpha-96A, Pp1-87B, Pp1-13C and flw.

The protein resides in the cytoplasm. Its function is as follows. Required for cytoplasmic pre-assembly of axonemal dyneins, thereby playing a central role in motility in cilia and flagella. Involved in pre-assembly of dynein arm complexes in the cytoplasm before intraflagellar transport loads them for the ciliary compartment. The polypeptide is Protein kintoun (Drosophila willistoni (Fruit fly)).